The chain runs to 314 residues: Oxalate oxidoreductase subunit beta (314 aa).

Positions 24, 27, 52, and 225 each coordinate [4Fe-4S] cluster.

As to quaternary structure, dimer of heterotrimer of one alpha, one beta and one delta subunit. [4Fe-4S] cluster is required as a cofactor.

The enzyme catalyses oxidized 2[4Fe-4S]-[ferredoxin] + oxalate = reduced 2[4Fe-4S]-[ferredoxin] + 2 CO2. Catalyzes the anaerobic oxidation of oxalate using a broad range of electron acceptors, including ferredoxin and the nickel-dependent carbon monoxide dehydrogenase. Does not require coenzyme A as cosubstrate. Enables anaerobic growth on oxalate which is used as energy source by the bacteria. The sequence is that of Oxalate oxidoreductase subunit beta from Moorella thermoacetica (strain ATCC 39073 / JCM 9320).